The sequence spans 378 residues: tRNA (guanine(26)-N(2))-dimethyltransferase (378 aa).

The 371-residue stretch at 4 to 374 folds into the Trm1 methyltransferase domain; it reads KEVTEGKVRI…KGYEEIIRCV (371 aa). Residues R44, R69, D87, D114, and A115 each coordinate S-adenosyl-L-methionine. Zn(2+)-binding residues include C246, C249, C263, and C266.

Belongs to the class I-like SAM-binding methyltransferase superfamily. Trm1 family.

It catalyses the reaction guanosine(26) in tRNA + 2 S-adenosyl-L-methionine = N(2)-dimethylguanosine(26) in tRNA + 2 S-adenosyl-L-homocysteine + 2 H(+). Its function is as follows. Dimethylates a single guanine residue at position 26 of a number of tRNAs using S-adenosyl-L-methionine as donor of the methyl groups. The protein is tRNA (guanine(26)-N(2))-dimethyltransferase of Saccharolobus islandicus (strain L.S.2.15 / Lassen #1) (Sulfolobus islandicus).